The primary structure comprises 416 residues: Serine hydroxymethyltransferase (416 aa).

(6S)-5,6,7,8-tetrahydrofolate contacts are provided by residues L118 and 122 to 124 (GHL). K227 carries the post-translational modification N6-(pyridoxal phosphate)lysine. (6S)-5,6,7,8-tetrahydrofolate-binding positions include E242 and 350 to 352 (SPF).

Belongs to the SHMT family. Homodimer. Requires pyridoxal 5'-phosphate as cofactor.

It is found in the cytoplasm. It carries out the reaction (6R)-5,10-methylene-5,6,7,8-tetrahydrofolate + glycine + H2O = (6S)-5,6,7,8-tetrahydrofolate + L-serine. It participates in one-carbon metabolism; tetrahydrofolate interconversion. Its pathway is amino-acid biosynthesis; glycine biosynthesis; glycine from L-serine: step 1/1. In terms of biological role, catalyzes the reversible interconversion of serine and glycine with tetrahydrofolate (THF) serving as the one-carbon carrier. This reaction serves as the major source of one-carbon groups required for the biosynthesis of purines, thymidylate, methionine, and other important biomolecules. Also exhibits THF-independent aldolase activity toward beta-hydroxyamino acids, producing glycine and aldehydes, via a retro-aldol mechanism. The chain is Serine hydroxymethyltransferase from Syntrophotalea carbinolica (strain DSM 2380 / NBRC 103641 / GraBd1) (Pelobacter carbinolicus).